The following is an 860-amino-acid chain: Protein argonaute-2 (860 aa).

At tyrosine 2 the chain carries 3'-nitrotyrosine. Residues 230–349 enclose the PAZ domain; sequence PVIEFVCEVL…LPLEVCNIVA (120 aa). Residues 312-317 form an interaction with guide RNA region; sequence YFKDRH. Serine 388 bears the Phosphoserine mark. The region spanning 518-819 is the Piwi domain; the sequence is LVVVILPGKT…VAFRARYHLV (302 aa). The tract at residues 525–567 is interaction with guide RNA; it reads GKTPVYAEVKRVGDTVLGMATQCVQMKNVQRTTPQTLSNLCLK. The segment at 588–591 is interaction with GW182 family members; sequence FQQP. An a divalent metal cation-binding site is contributed by aspartate 598. The segment at 651–661 is interaction with GW182 family members; that stretch reads LIQFYKSTRFK. Residue aspartate 670 participates in a divalent metal cation binding. Proline 701 carries the post-translational modification 4-hydroxyproline. 3 interaction with guide RNA regions span residues 710–711, 754–762, and 791–813; these read KR, HAGIQGTSR, and YVRC…VAFR. Histidine 808 serves as a coordination point for a divalent metal cation. Phosphoserine occurs at positions 825, 829, 832, and 835.

It belongs to the argonaute family. Ago subfamily. As to quaternary structure, interacts with DICER1 through its Piwi domain and with TARBP2 during assembly of the RNA-induced silencing complex (RISC). Together, DICER1, AGO2 and TARBP2 constitute the trimeric RISC loading complex (RLC), or micro-RNA (miRNA) loading complex (miRLC). Within the RLC/miRLC, DICER1 and TARBP2 are required to process precursor miRNAs (pre-miRNAs) to mature miRNAs and then load them onto AGO2. AGO2 bound to the mature miRNA constitutes the minimal RISC and may subsequently dissociate from DICER1 and TARBP2. Note however that the term RISC has also been used to describe the trimeric RLC/miRLC. The formation of RISC complexes containing siRNAs rather than miRNAs appears to occur independently of DICER1. Interacts with AGO1. Also interacts with DDB1, DDX5, DDX6, DDX20, DHX30, DHX36, DDX47, DHX9, ELAVL, FXR1, GEMIN4, HNRNPF, IGF2BP1, ILF3, IMP8, MATR3, PABPC1, PRMT5, P4HA1, P4HB, RBM4, SART3, TNRC6A, TNRC6B, UPF1 and YBX1. Interacts with the P-body components DCP1A and XRN1. Associates with polysomes and messenger ribonucleoproteins (mNRPs). Interacts with RBM4; the interaction is modulated under stress-induced conditions, occurs under both cell proliferation and differentiation conditions and in an RNA- and phosphorylation-independent manner. Interacts with LIMD1, WTIP and AJUBA. Interacts with TRIM71; the interaction increases in presence of RNA. Interacts with APOBEC3G in an RNA-dependent manner. Interacts with APOBEC3A, APOBEC3C, APOBEC3F and APOBEC3H. Interacts with DICER1, TARBP2, EIF6, MOV10 and RPL7A (60S ribosome subunit); they form a large RNA-induced silencing complex (RISC). Interacts with FMR1. Interacts with ZFP36. Interacts with RC3H1; the interaction is RNA independent. Found in a complex, composed of AGO2, CHD7 and ARB2A. Interacts with SND1 and SYT11. Interacts with CLNK. Interacts with GARRE1. Interacts with GRB2; this interaction is important for the formation of a ternary complex containing GRB2, AGO2 and DICER1. Mg(2+) is required as a cofactor. Requires Mn(2+) as cofactor. In terms of processing, hydroxylated. 4-hydroxylation appears to enhance protein stability but is not required for miRNA-binding or endonuclease activity. Ubiquitinated on surface-exposed lysines by a SCF-like E3 ubiquitin-protein ligase complex containing ZSWIM8 during target-directed microRNA degradation (TDMD), a process that mediates degradation of microRNAs (miRNAs). Ubiquitination by the SCF-like E3 ubiquitin-protein ligase complex containing ZSWIM8 leads to its subsequent degradation, thereby exposing miRNAs for degradation. ZSWIM8 recognizes and binds AGO2 when it is engaged with a TDMD target. Post-translationally, phosphorylation at Ser-388 by AKT3; leads to up-regulate translational repression of microRNA target and down-regulate endonucleolytic cleavage. In terms of processing, a phosphorylation cycle of C-terminal serine cluster (Ser-825-Ser-835) regulates the release of target mRNAs. Target-binding leads to phosphorylation of these residues by CSNK1A1, which reduces the affinity of AGO2 for mRNA and enables target release. The ANKRD52-PPP6C phosphatase complex dephosphorylates the residues, which primes AGO2 for binding a new target.

It is found in the cytoplasm. The protein localises to the P-body. It localises to the nucleus. The catalysed reaction is Endonucleolytic cleavage to 5'-phosphomonoester.. Its function is as follows. Required for RNA-mediated gene silencing (RNAi) by the RNA-induced silencing complex (RISC). The 'minimal RISC' appears to include AGO2 bound to a short guide RNA such as a microRNA (miRNA) or short interfering RNA (siRNA). These guide RNAs direct RISC to complementary mRNAs that are targets for RISC-mediated gene silencing. The precise mechanism of gene silencing depends on the degree of complementarity between the miRNA or siRNA and its target. Binding of RISC to a perfectly complementary mRNA generally results in silencing due to endonucleolytic cleavage of the mRNA specifically by AGO2. Binding of RISC to a partially complementary mRNA results in silencing through inhibition of translation, and this is independent of endonuclease activity. May inhibit translation initiation by binding to the 7-methylguanosine cap, thereby preventing the recruitment of the translation initiation factor eIF4-E. May also inhibit translation initiation via interaction with EIF6, which itself binds to the 60S ribosomal subunit and prevents its association with the 40S ribosomal subunit. The inhibition of translational initiation leads to the accumulation of the affected mRNA in cytoplasmic processing bodies (P-bodies), where mRNA degradation may subsequently occur. In some cases RISC-mediated translational repression is also observed for miRNAs that perfectly match the 3' untranslated region (3'-UTR). Can also up-regulate the translation of specific mRNAs under certain growth conditions. Binds to the AU element of the 3'-UTR of the TNF (TNF-alpha) mRNA and up-regulates translation under conditions of serum starvation. Also required for transcriptional gene silencing (TGS), in which short RNAs known as antigene RNAs or agRNAs direct the transcriptional repression of complementary promoter regions. This chain is Protein argonaute-2 (Ago2), found in Rattus norvegicus (Rat).